An 89-amino-acid polypeptide reads, in one-letter code: HssA/B-like protein 22 (89 aa).

It belongs to the hssA/B family.

This is HssA/B-like protein 22 (hssl22) from Dictyostelium discoideum (Social amoeba).